We begin with the raw amino-acid sequence, 296 residues long: MALAPELSRQTKLKEVAGIPLQAPTVDNWSQIQTFKAKPDDLLICTYPKSGTTWIQEIVDMIEQNGDVEKCQRTIIQHRHPFIEWARPPQPSGVDKANAMPAPRILRTHLPTQLLPPSFWTNNCKFLYVARNAKDCMVSYYHFYRMSQVLPDPGTWNEYFETFINGKVSWGSWFDHVKGWWEIRDRYQILFLFYEDMKRDPKREIQKVMQFMGKNLDEEVVDKIVLETSFEKMKENPMTNRSTVPKSVLDQSISPFMRKGTVGDWKNHFTVAQNDRFDEIYKQKMGGTSLNFCMEL.

Residue 49–54 (KSGTTW) participates in 3'-phosphoadenylyl sulfate binding. Position 107–109 (107–109 (RTH)) interacts with substrate. Catalysis depends on H109, which acts as the Proton acceptor. Residues R131, S139, Y194, and 228 to 233 (TSFEKM) each bind 3'-phosphoadenylyl sulfate. S139 bears the Phosphoserine mark. Position 254 is a phosphoserine (S254). 256–260 (FMRKG) provides a ligand contact to 3'-phosphoadenylyl sulfate.

It belongs to the sulfotransferase 1 family. In terms of tissue distribution, highly expressed in kidney and at lower levels in stomach and liver. More specifically found in the epithelia of proximal tubules of the kidney, of the bile duct, of the gastric mucosa, and in hepatocytes.

The protein resides in the cytoplasm. Its subcellular location is the lysosome. It localises to the mitochondrion. The enzyme catalyses a phenol + 3'-phosphoadenylyl sulfate = an aryl sulfate + adenosine 3',5'-bisphosphate + H(+). It catalyses the reaction cholesterol + 3'-phosphoadenylyl sulfate = cholesterol sulfate + adenosine 3',5'-bisphosphate + H(+). Its function is as follows. Sulfotransferase that utilizes 3'-phospho-5'-adenylyl sulfate (PAPS) to catalyze the sulfate conjugation of phenolic compounds. Does not transfer sulfate to steroids, dopamine, acetaminophen, or alpha-naphthol. Except in mitochondria, where it can add sulfate to cholesterol producing cholesterol sulfate, which alters mitochondrial membrane organization, and impacts protein complex mobility increasing state-III respiration, thereby modulating mitochondrial respiration. Catalyzes the sulfation of the carcinogenic N-hydroxy-2-acetylaminofluorene leading to highly reactive intermediates capable of forming DNA adducts, potentially resulting in mutagenesis. This chain is Sulfotransferase 1C2 (Sult1c2), found in Rattus norvegicus (Rat).